A 415-amino-acid polypeptide reads, in one-letter code: Dynein assembly factor with WD repeat domains 1 (415 aa).

WD repeat units follow at residues 90–129, 132–174, 175–214, 217–256, 259–298, 301–340, 343–384, and 386–415; these read AHILPLTNVALNKSGSCFITGSYDRTCKLWDTASGEELNT, GHRN…HTFR, GHTAEIVCLSFNPQSTLVATGSMDTTAKLWNIQNGEEVCT, GHSAEIISLSFNTSGDRIITGSFDHTVVVWDADTGGKVNI, GHCAEISSALFNWDCSLILTGSMDKTCMLWDATNGKCVAT, GHDDEILDSCFDYTGKLIATASADGTARIFSAATRKCIAK, GHEG…QVLE, and HTDEIFSCTFNYKGNIVITGSKDNTCRIWR.

Belongs to the WD repeat WDR69 family. As to quaternary structure, interacts with IFT46.

The protein localises to the cytoplasm. The protein resides in the cytoskeleton. It localises to the flagellum basal body. It is found in the flagellum axoneme. Functionally, required for axonemal dynein assembly and ciliary motility in ciliated organs, including Kupffer's vesicle, during embryogenesis. Facilitates the onset of robust cilia motility during development. This Macaca fascicularis (Crab-eating macaque) protein is Dynein assembly factor with WD repeat domains 1 (DAW1).